A 160-amino-acid polypeptide reads, in one-letter code: UPF0225 protein CGSHiEE_01665 (160 aa).

It belongs to the UPF0225 family.

This chain is UPF0225 protein CGSHiEE_01665, found in Haemophilus influenzae (strain PittEE).